Reading from the N-terminus, the 284-residue chain is Orotidine 5'-phosphate decarboxylase (284 aa).

Residues aspartate 42, 64 to 66 (KTH), 96 to 105 (DRKFADIGNT), tyrosine 237, and arginine 255 each bind substrate. Lysine 98 serves as the catalytic Proton donor.

This sequence belongs to the OMP decarboxylase family.

It carries out the reaction orotidine 5'-phosphate + H(+) = UMP + CO2. It participates in pyrimidine metabolism; UMP biosynthesis via de novo pathway; UMP from orotate: step 2/2. The polypeptide is Orotidine 5'-phosphate decarboxylase (URA3) (Magnusiomyces magnusii (Yeast)).